The sequence spans 560 residues: Formate--tetrahydrofolate ligase (560 aa).

69–76 (TPAGEGKS) contributes to the ATP binding site.

Belongs to the formate--tetrahydrofolate ligase family.

The enzyme catalyses (6S)-5,6,7,8-tetrahydrofolate + formate + ATP = (6R)-10-formyltetrahydrofolate + ADP + phosphate. The protein operates within one-carbon metabolism; tetrahydrofolate interconversion. The protein is Formate--tetrahydrofolate ligase of Listeria monocytogenes serotype 4b (strain CLIP80459).